Consider the following 439-residue polypeptide: Mitochondrial distribution and morphology protein 12 (439 aa).

One can recognise an SMP-LTD domain in the interval 1–439 (MSIDINWDTI…VYPSFWTFLV (439 aa)). 2 disordered regions span residues 65 to 165 (PLPD…PGAL) and 229 to 284 (LTLT…HEKS). The segment covering 69-90 (FYEDDEDYPDEEGDEAENEAED) has biased composition (acidic residues). Residues 109-121 (PSRDSQSRERGRG) show a composition bias toward basic and acidic residues. Residues 229–243 (LTLTPQSHPDPTSRP) show a composition bias toward polar residues.

The protein belongs to the MDM12 family. Component of the ER-mitochondria encounter structure (ERMES) or MDM complex, composed of MMM1, MDM10, mdm12 and MDM34. An MMM1 homodimer associates with one molecule of mdm12 on each side in a pairwise head-to-tail manner, and the SMP-LTD domains of MMM1 and mdm12 generate a continuous hydrophobic tunnel for phospholipid trafficking.

The protein resides in the mitochondrion outer membrane. Its subcellular location is the endoplasmic reticulum membrane. Component of the ERMES/MDM complex, which serves as a molecular tether to connect the endoplasmic reticulum (ER) and mitochondria. Components of this complex are involved in the control of mitochondrial shape and protein biogenesis, and function in nonvesicular lipid trafficking between the ER and mitochondria. mdm12 is required for the interaction of the ER-resident membrane protein MMM1 and the outer mitochondrial membrane-resident beta-barrel protein MDM10. The mdm12-MMM1 subcomplex functions in the major beta-barrel assembly pathway that is responsible for biogenesis of all mitochondrial outer membrane beta-barrel proteins, and acts in a late step after the SAM complex. The MDM10-mdm12-MMM1 subcomplex further acts in the TOM40-specific pathway after the action of the mdm12-MMM1 complex. Essential for establishing and maintaining the structure of mitochondria and maintenance of mtDNA nucleoids. The sequence is that of Mitochondrial distribution and morphology protein 12 from Pyrenophora tritici-repentis (strain Pt-1C-BFP) (Wheat tan spot fungus).